A 204-amino-acid polypeptide reads, in one-letter code: Small ribosomal subunit protein uS4 (204 aa).

The S4 RNA-binding domain maps to 93 to 156; it reads SRLSSVLYHS…AKIPVVVEAE (64 aa).

It belongs to the universal ribosomal protein uS4 family. In terms of assembly, part of the 30S ribosomal subunit. Contacts protein S5. The interaction surface between S4 and S5 is involved in control of translational fidelity.

In terms of biological role, one of the primary rRNA binding proteins, it binds directly to 16S rRNA where it nucleates assembly of the body of the 30S subunit. Its function is as follows. With S5 and S12 plays an important role in translational accuracy. The sequence is that of Small ribosomal subunit protein uS4 from Wolbachia pipientis wMel.